A 187-amino-acid chain; its full sequence is Elongation factor P (187 aa).

It belongs to the elongation factor P family.

It is found in the cytoplasm. It participates in protein biosynthesis; polypeptide chain elongation. In terms of biological role, involved in peptide bond synthesis. Stimulates efficient translation and peptide-bond synthesis on native or reconstituted 70S ribosomes in vitro. Probably functions indirectly by altering the affinity of the ribosome for aminoacyl-tRNA, thus increasing their reactivity as acceptors for peptidyl transferase. The protein is Elongation factor P of Fusobacterium nucleatum subsp. nucleatum (strain ATCC 25586 / DSM 15643 / BCRC 10681 / CIP 101130 / JCM 8532 / KCTC 2640 / LMG 13131 / VPI 4355).